The chain runs to 124 residues: Non-structural protein 2 (124 aa).

The DLNP; interaction with MAP1B signature appears at 121–124 (DLNP).

The protein belongs to the pneumovirus non-structural protein 2 family. In terms of assembly, monomer (instable). Homomultimer. Heteromultimer with NS1. Interacts with host RIGI (via N-terminus); this interaction prevents host signaling pathway involved in interferon production. Interacts with host MAP1B/microtubule-associated protein 1B.

It localises to the host mitochondrion. Functionally, plays a major role in antagonizing the type I IFN-mediated antiviral response. Acts cooperatively with NS1 to repress activation and nuclear translocation of host IFN-regulatory factor IRF3. Interacts with the host cytoplasmic sensor of viral nucleic acids RIGI and prevents the interaction with its downstream partner MAVS. Together with NS2, participates in the proteasomal degradation of host STAT2, IRF3, IRF7, TBK1 and RIGI through a NS-degradasome involving CUL2 and Elongin-C. The degradasome requires an intact mitochondrial MAVS. Induces host SOCS1 expression. Induces activation of NF-kappa-B. Suppresses premature apoptosis by an NF-kappa-B-dependent, interferon-independent mechanism promoting continued viral replication. The polypeptide is Non-structural protein 2 (1B) (Human respiratory syncytial virus B (strain B1)).